Here is a 718-residue protein sequence, read N- to C-terminus: Putative aminodeoxychorismate synthase (718 aa).

Residues Gln9–Gln203 form the Glutamine amidotransferase type-1 domain. Catalysis depends on Cys88, which acts as the Nucleophile. Residues His177 and Glu179 contribute to the active site. Residues Phe266–Lys718 are PABB component.

It in the C-terminal section; belongs to the anthranilate synthase component I family.

Its subcellular location is the cytoplasm. The protein resides in the nucleus. It carries out the reaction chorismate + L-glutamine = 4-amino-4-deoxychorismate + L-glutamate. Its pathway is cofactor biosynthesis; tetrahydrofolate biosynthesis; 4-aminobenzoate from chorismate: step 1/2. Functionally, catalyzes the biosynthesis of 4-amino-4-deoxychorismate (ADC) from chorismate and glutamine. Required for the synthesis of 4-aminobenzoate (PABA), an important component in tetrahydrofolate biosynthesis. This is Putative aminodeoxychorismate synthase from Schizosaccharomyces pombe (strain 972 / ATCC 24843) (Fission yeast).